An 84-amino-acid polypeptide reads, in one-letter code: U8-theraphotoxin-Hhn1g (84 aa).

The signal sequence occupies residues 1–21 (MKVVLLVCLVWMMAMMELVSC). Intrachain disulfides connect cysteine 23/cysteine 35, cysteine 29/cysteine 44, cysteine 34/cysteine 67, cysteine 54/cysteine 75, and cysteine 69/cysteine 81.

This sequence belongs to the AVIT (prokineticin) family. Expressed by the venom gland.

Its subcellular location is the secreted. This is U8-theraphotoxin-Hhn1g from Cyriopagopus hainanus (Chinese bird spider).